The following is a 942-amino-acid chain: UvrABC system protein A (942 aa).

Gly32–Ser39 provides a ligand contact to ATP. The C4-type zinc-finger motif lies at Cys251–Cys278. 2 ABC transporter domains span residues Trp308–Ile589 and Gly609–Lys937. Gly641–Ser648 contributes to the ATP binding site. A C4-type zinc finger spans residues Cys740 to Cys766.

The protein belongs to the ABC transporter superfamily. UvrA family. Forms a heterotetramer with UvrB during the search for lesions.

The protein resides in the cytoplasm. Functionally, the UvrABC repair system catalyzes the recognition and processing of DNA lesions. UvrA is an ATPase and a DNA-binding protein. A damage recognition complex composed of 2 UvrA and 2 UvrB subunits scans DNA for abnormalities. When the presence of a lesion has been verified by UvrB, the UvrA molecules dissociate. The polypeptide is UvrABC system protein A (Streptococcus pyogenes serotype M3 (strain ATCC BAA-595 / MGAS315)).